The sequence spans 502 residues: C2H2-type transcription factor MSN2 (502 aa).

2 C2H2-type zinc fingers span residues 385 to 408 (FVCH…RSLH) and 414 to 436 (FACG…SRIH).

It localises to the nucleus. Its function is as follows. Key downstream transcription factor in the HOG1-MAPK pathway. Plays crucial roles in the regulation of growth, conidiation, trap development and fatty acid metabolism. Negatively regulates secondary metabolism such as arthrobotrisins biosynthesis.Also regulates autophagy and endocytosis. This chain is C2H2-type transcription factor MSN2, found in Arthrobotrys oligospora (strain ATCC 24927 / CBS 115.81 / DSM 1491) (Nematode-trapping fungus).